A 1129-amino-acid polypeptide reads, in one-letter code: MPATRKPMRYGHTEGHTEVCFDDSGSFIVTCGSDGDVRIWEDLDDDDPKFINVGEKAYSCALKSGKLVTAVSNNTIQVHTFPEGVPDGILTRFTTNANHVVFNGDGTKIAAGSSDFLVKIVDVMDSSQQKTFRGHDAPVLSLSFDPKDIFLASASCDGSVRVWQISDQTCAISWPLLQKCNDVINAKSICRLAWQPKSGKLLAIPVEKSVKLYRRESWSHQFDLSDNFISQTLNIVTWSPCGQYLAAGSINGLIIVWNVETKDCMERVKHEKGYAICGLAWHPTCGRISYTDAEGNLGLLENVCDPSGKTSSSKVSSRVEKDYNDLFDGDDMSNAGDFLNDNAVEIPSFSKGIINDDEDDEDLMMASGRPRQRSHILEDDENSVDISMLKTGSSLLKEEEEDGQEGSIHNLPLVTSQRPFYDGPMPTPRQKPFQSGSTPLHLTHRFMVWNSIGIIRCYNDEQDNAIDVEFHDTSIHHATHLSNTLNYTIADLSHEAILLACESTDELASKLHCLHFSSWDSSKEWIIDLPQNEDIEAICLGQGWAAAATSALLLRLFTIGGVQKEVFSLAGPVVSMAGHGEQLFIVYHRGTGFDGDQCLGVQLLELGKKKKQILHGDPLPLTRKSYLAWIGFSAEGTPCYVDSEGIVRMLNRGLGNTWTPICNTREHCKGKSDHYWVVGIHENPQQLRCIPCKGSRFPPTLPRPAVAILSFKLPYCQIATEKGQMEEQFWRSVIFHNHLDYLAKNGYEYEESTKNQATKEQQELLMKMLALSCKLEREFRCVELADLMTQNAVNLAIKYASRSRKLILAQKLSELAVEKAAELTATQVEEEEEEEDFRKKLNAGYSNTATEWSQPRFRNQVEEDAEDSGEADDEEKPEIHKPGQNSFSKSTNSSDVSAKSGAVTFSSQGRVNPFKVSASSKEPAMSMNSARSTNILDNMGKSSKKSTALSRTTNNEKSPIIKPLIPKPKPKQASAASYFQKRNSQTNKTEEVKEENLKNVLSETPAICPPQNTENQRPKTGFQMWLEENRSNILSDNPDFSDEADIIKEGMIRFRVLSTEERKVWANKAKGETASEGTEAKKRKRVVDESDETENQEEKAKENLNLSKKQKPLDFSTNQKLSAFAFKQE.

WD repeat units lie at residues G11–F50, N52–T91, R92–T131, G134–S173, I184–D223, F228–R267, and E271–T310. Residues S333, S374, S383, and S387 each carry the phosphoserine modification. K397 is covalently cross-linked (Glycyl lysine isopeptide (Lys-Gly) (interchain with G-Cter in SUMO2)). K671 is modified (N6-acetyllysine). T824 and T826 each carry phosphothreonine. Polar residues predominate over residues T848 to F857. Disordered stretches follow at residues T848–S897 and V916–R1017. Over residues E862–K876 the composition is skewed to acidic residues. S868 carries the phosphoserine modification. Residues G883–S897 are compositionally biased toward polar residues. S917, S919, and S932 each carry phosphoserine. 2 stretches are compositionally biased toward polar residues: residues S926–L936 and K945–E956. K962 carries the N6-acetyllysine modification. Positions S974–N987 are enriched in polar residues. S984 carries the phosphoserine modification. Positions K988 to L997 are enriched in basic and acidic residues. Residues Q1016–E1079 constitute a DNA-binding region (HMG box). 2 positions are modified to phosphoserine: S1041 and S1090. The disordered stretch occupies residues K1068–L1113. A Glycyl lysine isopeptide (Lys-Gly) (interchain with G-Cter in SUMO1); alternate cross-link involves residue K1127. K1127 participates in a covalent cross-link: Glycyl lysine isopeptide (Lys-Gly) (interchain with G-Cter in SUMO2); alternate.

In terms of assembly, trimer. Interacts with the polymerase alpha catalytic subunit POLA1. Interacts with MCM10. Interacts with DNA2. Interacts with CDC45 and GINS2 subunit of GINS complex; these interactions associate WDHD1 with the CMG helicase complex.

The protein resides in the nucleus. It localises to the nucleoplasm. Its function is as follows. Core replisome component that acts as a replication initiation factor. Binds directly to the CMG complex and functions as a hub to recruit additional proteins to the replication fork. This chain is WD repeat and HMG-box DNA-binding protein 1, found in Homo sapiens (Human).